Consider the following 321-residue polypeptide: Phosphoenolpyruvate transferase (321 aa).

Position 51 (Asp51) interacts with 7,8-didemethyl-8-hydroxy-5-deazariboflavin.

This sequence belongs to the CofD family. As to quaternary structure, homodimer. Requires Mg(2+) as cofactor.

It carries out the reaction enolpyruvoyl-2-diphospho-5'-guanosine + 7,8-didemethyl-8-hydroxy-5-deazariboflavin = dehydro coenzyme F420-0 + GMP + H(+). It participates in cofactor biosynthesis; coenzyme F420 biosynthesis. In terms of biological role, catalyzes the transfer of the phosphoenolpyruvate moiety from enoylpyruvoyl-2-diphospho-5'-guanosine (EPPG) to 7,8-didemethyl-8-hydroxy-5-deazariboflavin (FO) with the formation of dehydro coenzyme F420-0 and GMP. In Kitasatospora aureofaciens (Streptomyces aureofaciens), this protein is Phosphoenolpyruvate transferase.